The sequence spans 76 residues: Defensin-like protein 5 (76 aa).

Positions M1–A29 are cleaved as a signal peptide. 4 disulfide bridges follow: C32/C76, C43/C63, C49/C70, and C53/C72.

It belongs to the DEFL family.

It localises to the secreted. Its function is as follows. Confers broad-spectrum resistance to pathogens. This is Defensin-like protein 5 (PDF2.4) from Arabidopsis thaliana (Mouse-ear cress).